A 64-amino-acid polypeptide reads, in one-letter code: MAKIRQKTKRAVAKRFSITKNGKLKRKHAYRSHLALGRSTKAKRHLRKDAIMSTSDTKRYTQCL.

It belongs to the bacterial ribosomal protein bL35 family.

The polypeptide is Large ribosomal subunit protein bL35 (Ureaplasma parvum serovar 3 (strain ATCC 27815 / 27 / NCTC 11736)).